A 306-amino-acid polypeptide reads, in one-letter code: Methionyl-tRNA formyltransferase (306 aa).

110–113 provides a ligand contact to (6S)-5,6,7,8-tetrahydrofolate; sequence SLLP.

The protein belongs to the Fmt family.

It catalyses the reaction L-methionyl-tRNA(fMet) + (6R)-10-formyltetrahydrofolate = N-formyl-L-methionyl-tRNA(fMet) + (6S)-5,6,7,8-tetrahydrofolate + H(+). In terms of biological role, attaches a formyl group to the free amino group of methionyl-tRNA(fMet). The formyl group appears to play a dual role in the initiator identity of N-formylmethionyl-tRNA by promoting its recognition by IF2 and preventing the misappropriation of this tRNA by the elongation apparatus. In Brucella suis biovar 1 (strain 1330), this protein is Methionyl-tRNA formyltransferase.